Reading from the N-terminus, the 278-residue chain is Large ribosomal subunit protein uL2 (278 aa).

The tract at residues 223-278 (GVAMNPIDHPHGGGEGRTSGGRHPVTPWGFPTKGKKTRSNKRTDTFIVSSRHNRKK) is disordered.

Belongs to the universal ribosomal protein uL2 family. Part of the 50S ribosomal subunit. Forms a bridge to the 30S subunit in the 70S ribosome.

In terms of biological role, one of the primary rRNA binding proteins. Required for association of the 30S and 50S subunits to form the 70S ribosome, for tRNA binding and peptide bond formation. It has been suggested to have peptidyltransferase activity; this is somewhat controversial. Makes several contacts with the 16S rRNA in the 70S ribosome. The protein is Large ribosomal subunit protein uL2 of Methylobacterium sp. (strain 4-46).